Here is a 301-residue protein sequence, read N- to C-terminus: Tyrosine recombinase XerC (301 aa).

The 83-residue stretch at 2–84 (TNTQFYITNF…TLRSFFSYLY (83 aa)) folds into the Core-binding (CB) domain. In terms of domain architecture, Tyr recombinase spans 105-291 (ALPKFLTVDD…DLKHLIEVYD (187 aa)). Catalysis depends on residues arginine 145, lysine 169, histidine 243, arginine 246, and histidine 269. The active-site O-(3'-phospho-DNA)-tyrosine intermediate is the tyrosine 278.

Belongs to the 'phage' integrase family. XerC subfamily. In terms of assembly, forms a cyclic heterotetrameric complex composed of two molecules of XerC and two molecules of XerD.

It is found in the cytoplasm. Its function is as follows. Site-specific tyrosine recombinase, which acts by catalyzing the cutting and rejoining of the recombining DNA molecules. The XerC-XerD complex is essential to convert dimers of the bacterial chromosome into monomers to permit their segregation at cell division. It also contributes to the segregational stability of plasmids. The sequence is that of Tyrosine recombinase XerC from Thermodesulfovibrio yellowstonii (strain ATCC 51303 / DSM 11347 / YP87).